Reading from the N-terminus, the 63-residue chain is Potassium channel toxin MeuTXKalpha4 (63 aa).

The signal sequence occupies residues 1–28; that stretch reads MSRLLIFILTAVVLSVIIDILNNSKVEG. 3 cysteine pairs are disulfide-bonded: cysteine 35–cysteine 53, cysteine 39–cysteine 59, and cysteine 43–cysteine 61.

Belongs to the short scorpion toxin superfamily. Potassium channel inhibitor family. As to expression, expressed by the venom gland.

It localises to the secreted. Functionally, may block voltage-gated potassium channels (Kv). This Mesobuthus eupeus (Lesser Asian scorpion) protein is Potassium channel toxin MeuTXKalpha4.